A 279-amino-acid polypeptide reads, in one-letter code: Diaminopimelate epimerase (279 aa).

2 residues coordinate substrate: asparagine 13 and asparagine 66. The Proton donor role is filled by cysteine 75. Substrate contacts are provided by residues 76–77 (GN), asparagine 162, asparagine 195, and 213–214 (ER). Cysteine 222 serves as the catalytic Proton acceptor. 223–224 (GT) contributes to the substrate binding site.

This sequence belongs to the diaminopimelate epimerase family. In terms of assembly, homodimer.

The protein resides in the cytoplasm. The catalysed reaction is (2S,6S)-2,6-diaminopimelate = meso-2,6-diaminopimelate. Its pathway is amino-acid biosynthesis; L-lysine biosynthesis via DAP pathway; DL-2,6-diaminopimelate from LL-2,6-diaminopimelate: step 1/1. Functionally, catalyzes the stereoinversion of LL-2,6-diaminopimelate (L,L-DAP) to meso-diaminopimelate (meso-DAP), a precursor of L-lysine and an essential component of the bacterial peptidoglycan. The sequence is that of Diaminopimelate epimerase from Synechocystis sp. (strain ATCC 27184 / PCC 6803 / Kazusa).